The following is a 163-amino-acid chain: NADH-quinone oxidoreductase subunit I (163 aa).

2 consecutive 4Fe-4S ferredoxin-type domains span residues 55–84 and 94–123; these read RRYP…IDAE and TRYD…EGPN. Positions 64, 67, 70, 74, 103, 106, 109, and 113 each coordinate [4Fe-4S] cluster.

The protein belongs to the complex I 23 kDa subunit family. As to quaternary structure, NDH-1 is composed of 14 different subunits. Subunits NuoA, H, J, K, L, M, N constitute the membrane sector of the complex. [4Fe-4S] cluster is required as a cofactor.

The protein localises to the cell inner membrane. The catalysed reaction is a quinone + NADH + 5 H(+)(in) = a quinol + NAD(+) + 4 H(+)(out). Functionally, NDH-1 shuttles electrons from NADH, via FMN and iron-sulfur (Fe-S) centers, to quinones in the respiratory chain. The immediate electron acceptor for the enzyme in this species is believed to be ubiquinone. Couples the redox reaction to proton translocation (for every two electrons transferred, four hydrogen ions are translocated across the cytoplasmic membrane), and thus conserves the redox energy in a proton gradient. The chain is NADH-quinone oxidoreductase subunit I (nuoI) from Rhodobacter capsulatus (Rhodopseudomonas capsulata).